The chain runs to 459 residues: ATP synthase subunit beta (459 aa).

Residue 149 to 156 (GGAGVGKT) coordinates ATP.

The protein belongs to the ATPase alpha/beta chains family. As to quaternary structure, F-type ATPases have 2 components, CF(1) - the catalytic core - and CF(0) - the membrane proton channel. CF(1) has five subunits: alpha(3), beta(3), gamma(1), delta(1), epsilon(1). CF(0) has three main subunits: a(1), b(2) and c(9-12). The alpha and beta chains form an alternating ring which encloses part of the gamma chain. CF(1) is attached to CF(0) by a central stalk formed by the gamma and epsilon chains, while a peripheral stalk is formed by the delta and b chains.

It is found in the cell inner membrane. The catalysed reaction is ATP + H2O + 4 H(+)(in) = ADP + phosphate + 5 H(+)(out). In terms of biological role, produces ATP from ADP in the presence of a proton gradient across the membrane. The catalytic sites are hosted primarily by the beta subunits. This Pseudomonas savastanoi pv. phaseolicola (strain 1448A / Race 6) (Pseudomonas syringae pv. phaseolicola (strain 1448A / Race 6)) protein is ATP synthase subunit beta.